We begin with the raw amino-acid sequence, 122 residues long: Large ribosomal subunit protein eL34 (122 aa).

The protein belongs to the eukaryotic ribosomal protein eL34 family.

The sequence is that of Large ribosomal subunit protein eL34 (rpl34) from Dictyostelium discoideum (Social amoeba).